Reading from the N-terminus, the 440-residue chain is MLSVSEVNRRIAGLLERHFALGWVRGEISNFTRAGSGHWYFSLKDAGAQIRCVMFKGRNQYADFTPREGEAIEVRALVTLYEARGELQLSVEAIRRAGLGNLYEAFLRLKAALEAQGLFDAARKRPLPRHPHAIGVVTSLQAAALRDVLTTLHRRAPHVPVVVYPVPVQGAGAAERIAAMLDLVNARAEVDVIILCRGGGSIEDLWAFNEEPVARAVAASDIPIVAGVGHETDVTIVDFVADVRAPTPTGAAELVSPDRARMLRDVAGCWDALSATLRRQLDRRAQTVDWLARRLRSPQAQMRERRAGLAHLEGRLRFALHGRVQRAEHGQRLLAMRLDAARPDIARERTALQGIEAALARAMRATLDRAQTRLSHHQAGLELLAPQRTLERGYAVLLDAKGQAIRDPAALHARARIEARLARGAVDIEIAQVQPKLPEM.

The protein belongs to the XseA family. As to quaternary structure, heterooligomer composed of large and small subunits.

Its subcellular location is the cytoplasm. The catalysed reaction is Exonucleolytic cleavage in either 5'- to 3'- or 3'- to 5'-direction to yield nucleoside 5'-phosphates.. Bidirectionally degrades single-stranded DNA into large acid-insoluble oligonucleotides, which are then degraded further into small acid-soluble oligonucleotides. The sequence is that of Exodeoxyribonuclease 7 large subunit from Ralstonia nicotianae (strain ATCC BAA-1114 / GMI1000) (Ralstonia solanacearum).